Here is a 70-residue protein sequence, read N- to C-terminus: Pyruvate-flavodoxin oxidoreductase (70 aa).

It belongs to the pyruvate:ferredoxin/flavodoxin oxidoreductase family.

It carries out the reaction oxidized [flavodoxin] + pyruvate + CoA + 2 H(+) = reduced [flavodoxin] + acetyl-CoA + CO2. In terms of biological role, oxidoreductase required for the transfer of electrons from pyruvate to flavodoxin, which reduces nitrogenase. In Anabaena variabilis, this protein is Pyruvate-flavodoxin oxidoreductase (nifJ).